The primary structure comprises 306 residues: Acetyl-coenzyme A carboxylase carboxyl transferase subunit beta (306 aa).

Residues 25 to 294 (LWIKDPTSGE…VFNPSDPSPT (270 aa)) enclose the CoA carboxyltransferase N-terminal domain. The interval 286 to 306 (FNPSDPSPTDSQTSLSTTKAA) is disordered. Low complexity predominate over residues 288-306 (PSDPSPTDSQTSLSTTKAA).

The protein belongs to the AccD/PCCB family. In terms of assembly, acetyl-CoA carboxylase is a heterohexamer composed of biotin carboxyl carrier protein (AccB), biotin carboxylase (AccC) and two subunits each of ACCase subunit alpha (AccA) and ACCase subunit beta (AccD).

Its subcellular location is the cytoplasm. The catalysed reaction is N(6)-carboxybiotinyl-L-lysyl-[protein] + acetyl-CoA = N(6)-biotinyl-L-lysyl-[protein] + malonyl-CoA. The protein operates within lipid metabolism; malonyl-CoA biosynthesis; malonyl-CoA from acetyl-CoA: step 1/1. Functionally, component of the acetyl coenzyme A carboxylase (ACC) complex. Biotin carboxylase (BC) catalyzes the carboxylation of biotin on its carrier protein (BCCP) and then the CO(2) group is transferred by the transcarboxylase to acetyl-CoA to form malonyl-CoA. The polypeptide is Acetyl-coenzyme A carboxylase carboxyl transferase subunit beta (Bartonella grahamii (strain as4aup)).